We begin with the raw amino-acid sequence, 149 residues long: Large ribosomal subunit protein uL13 (149 aa).

The protein belongs to the universal ribosomal protein uL13 family. As to quaternary structure, part of the 50S ribosomal subunit.

This protein is one of the early assembly proteins of the 50S ribosomal subunit, although it is not seen to bind rRNA by itself. It is important during the early stages of 50S assembly. In Bifidobacterium longum (strain DJO10A), this protein is Large ribosomal subunit protein uL13.